The primary structure comprises 48 residues: Glycine-rich RNA-binding protein 2 (48 aa).

In Populus euphratica (Euphrates poplar), this protein is Glycine-rich RNA-binding protein 2.